The sequence spans 225 residues: Leucyl/phenylalanyl-tRNA--protein transferase (225 aa).

It belongs to the L/F-transferase family.

Its subcellular location is the cytoplasm. The catalysed reaction is N-terminal L-lysyl-[protein] + L-leucyl-tRNA(Leu) = N-terminal L-leucyl-L-lysyl-[protein] + tRNA(Leu) + H(+). It catalyses the reaction N-terminal L-arginyl-[protein] + L-leucyl-tRNA(Leu) = N-terminal L-leucyl-L-arginyl-[protein] + tRNA(Leu) + H(+). The enzyme catalyses L-phenylalanyl-tRNA(Phe) + an N-terminal L-alpha-aminoacyl-[protein] = an N-terminal L-phenylalanyl-L-alpha-aminoacyl-[protein] + tRNA(Phe). In terms of biological role, functions in the N-end rule pathway of protein degradation where it conjugates Leu, Phe and, less efficiently, Met from aminoacyl-tRNAs to the N-termini of proteins containing an N-terminal arginine or lysine. In Nitrobacter hamburgensis (strain DSM 10229 / NCIMB 13809 / X14), this protein is Leucyl/phenylalanyl-tRNA--protein transferase.